Reading from the N-terminus, the 217-residue chain is Uracil-DNA glycosylase (217 aa).

The active-site Proton acceptor is Asp-62.

This sequence belongs to the uracil-DNA glycosylase (UDG) superfamily. UNG family.

It localises to the cytoplasm. It carries out the reaction Hydrolyzes single-stranded DNA or mismatched double-stranded DNA and polynucleotides, releasing free uracil.. Functionally, excises uracil residues from the DNA which can arise as a result of misincorporation of dUMP residues by DNA polymerase or due to deamination of cytosine. This chain is Uracil-DNA glycosylase, found in Streptococcus pneumoniae (strain P1031).